The chain runs to 141 residues: Arsenate reductase (141 aa).

Catalysis depends on cysteine 12, which acts as the Nucleophile; cysteine thioarsenate intermediate.

This sequence belongs to the ArsC family.

The catalysed reaction is [glutaredoxin]-dithiol + arsenate + glutathione + H(+) = glutathionyl-S-S-[glutaredoxin] + arsenite + H2O. Its function is as follows. Involved in resistance to arsenate. Catalyzes the reduction of arsenate [As(V)] to arsenite [As(III)]. The sequence is that of Arsenate reductase from Escherichia coli (strain K12).